The primary structure comprises 872 residues: Alanine--tRNA ligase (872 aa).

Positions 567, 571, 669, and 673 each coordinate Zn(2+).

The protein belongs to the class-II aminoacyl-tRNA synthetase family. Zn(2+) serves as cofactor.

The protein localises to the cytoplasm. It carries out the reaction tRNA(Ala) + L-alanine + ATP = L-alanyl-tRNA(Ala) + AMP + diphosphate. Its function is as follows. Catalyzes the attachment of alanine to tRNA(Ala) in a two-step reaction: alanine is first activated by ATP to form Ala-AMP and then transferred to the acceptor end of tRNA(Ala). Also edits incorrectly charged Ser-tRNA(Ala) and Gly-tRNA(Ala) via its editing domain. The chain is Alanine--tRNA ligase from Streptococcus pyogenes serotype M2 (strain MGAS10270).